A 98-amino-acid polypeptide reads, in one-letter code: Small ribosomal subunit protein bS20 (98 aa).

The span at 1–12 (MAPRKPSKKVGP) shows a compositional bias: basic residues. Residues 1–31 (MAPRKPSKKVGPQKRPSAEKRVITSKKKQLR) are disordered.

Belongs to the bacterial ribosomal protein bS20 family.

Functionally, binds directly to 16S ribosomal RNA. The polypeptide is Small ribosomal subunit protein bS20 (Chlamydia trachomatis serovar L2 (strain ATCC VR-902B / DSM 19102 / 434/Bu)).